Consider the following 96-residue polypeptide: Nucleoid-associated protein DR_0199 (96 aa).

It belongs to the YbaB/EbfC family. Homodimer.

It is found in the cytoplasm. Its subcellular location is the nucleoid. In terms of biological role, binds to DNA and alters its conformation. May be involved in regulation of gene expression, nucleoid organization and DNA protection. The polypeptide is Nucleoid-associated protein DR_0199 (Deinococcus radiodurans (strain ATCC 13939 / DSM 20539 / JCM 16871 / CCUG 27074 / LMG 4051 / NBRC 15346 / NCIMB 9279 / VKM B-1422 / R1)).